Here is a 227-residue protein sequence, read N- to C-terminus: MAHAVQYGFQDAAAPIMEELLYFHDHTLMIVFMISSLVLYIISLMLSTELTHTSTMDAQEVETVWTILPAVILILIALPSLRILYMMDEIETPSLTLKTVGHQWYWSYEYTDYDKLCFDSYMTPTPDLEPGDLRLLEVDNRVVLPTEMSIRMLITSEDVLHSWTVPALGIKTDAIPGRLNQATLMTSRVGIYYGQCSEICGANHSYMPIVLELVPLKYFEEWLLKTL.

Over 1–14 (MAHAVQYGFQDAAA) the chain is Mitochondrial intermembrane. Residues 15-45 (PIMEELLYFHDHTLMIVFMISSLVLYIISLM) traverse the membrane as a helical segment. At 46-59 (LSTELTHTSTMDAQ) the chain is on the mitochondrial matrix side. A helical transmembrane segment spans residues 60-87 (EVETVWTILPAVILILIALPSLRILYMM). The Mitochondrial intermembrane portion of the chain corresponds to 88–227 (DEIETPSLTL…YFEEWLLKTL (140 aa)). The Cu cation site is built by histidine 161, cysteine 196, glutamate 198, cysteine 200, histidine 204, and methionine 207. Glutamate 198 provides a ligand contact to Mg(2+). Tyrosine 218 carries the post-translational modification Phosphotyrosine.

It belongs to the cytochrome c oxidase subunit 2 family. As to quaternary structure, component of the cytochrome c oxidase (complex IV, CIV), a multisubunit enzyme composed of 14 subunits. The complex is composed of a catalytic core of 3 subunits MT-CO1, MT-CO2 and MT-CO3, encoded in the mitochondrial DNA, and 11 supernumerary subunits COX4I, COX5A, COX5B, COX6A, COX6B, COX6C, COX7A, COX7B, COX7C, COX8 and NDUFA4, which are encoded in the nuclear genome. The complex exists as a monomer or a dimer and forms supercomplexes (SCs) in the inner mitochondrial membrane with NADH-ubiquinone oxidoreductase (complex I, CI) and ubiquinol-cytochrome c oxidoreductase (cytochrome b-c1 complex, complex III, CIII), resulting in different assemblies (supercomplex SCI(1)III(2)IV(1) and megacomplex MCI(2)III(2)IV(2)). Found in a complex with TMEM177, COA6, COX18, COX20, SCO1 and SCO2. Interacts with TMEM177 in a COX20-dependent manner. Interacts with COX20. Interacts with COX16. Cu cation is required as a cofactor.

It is found in the mitochondrion inner membrane. The enzyme catalyses 4 Fe(II)-[cytochrome c] + O2 + 8 H(+)(in) = 4 Fe(III)-[cytochrome c] + 2 H2O + 4 H(+)(out). Functionally, component of the cytochrome c oxidase, the last enzyme in the mitochondrial electron transport chain which drives oxidative phosphorylation. The respiratory chain contains 3 multisubunit complexes succinate dehydrogenase (complex II, CII), ubiquinol-cytochrome c oxidoreductase (cytochrome b-c1 complex, complex III, CIII) and cytochrome c oxidase (complex IV, CIV), that cooperate to transfer electrons derived from NADH and succinate to molecular oxygen, creating an electrochemical gradient over the inner membrane that drives transmembrane transport and the ATP synthase. Cytochrome c oxidase is the component of the respiratory chain that catalyzes the reduction of oxygen to water. Electrons originating from reduced cytochrome c in the intermembrane space (IMS) are transferred via the dinuclear copper A center (CU(A)) of subunit 2 and heme A of subunit 1 to the active site in subunit 1, a binuclear center (BNC) formed by heme A3 and copper B (CU(B)). The BNC reduces molecular oxygen to 2 water molecules using 4 electrons from cytochrome c in the IMS and 4 protons from the mitochondrial matrix. The polypeptide is Cytochrome c oxidase subunit 2 (MT-CO2) (Galago senegalensis (Northern lesser bushbaby)).